Consider the following 470-residue polypeptide: Neuraminidase (470 aa).

Residues 1–6 are Intravirion-facing; that stretch reads MNPNQK. Residues 7-27 form a helical membrane-spanning segment; it reads IITIGSISIAIGIISLMLQIG. The involved in apical transport and lipid raft association stretch occupies residues 11–33; it reads GSISIAIGIISLMLQIGNIISIW. Over 28–470 the chain is Virion surface; that stretch reads NIISIWASHS…GAELPFTIDK (443 aa). The hypervariable stalk region stretch occupies residues 36-90; sequence HSIQTGSQNHTGICNQRIITYENSTWVNHTYVNINNTNVVAGKDKTSVTLAGNSS. N-linked (GlcNAc...) asparagine; by host glycans are attached at residues asparagine 44, asparagine 58, asparagine 63, asparagine 70, and asparagine 88. Positions 91 to 470 are head of neuraminidase; sequence LCSISGWAIY…GAELPFTIDK (380 aa). 8 cysteine pairs are disulfide-bonded: cysteine 92-cysteine 417, cysteine 124-cysteine 129, cysteine 184-cysteine 231, cysteine 233-cysteine 238, cysteine 279-cysteine 292, cysteine 281-cysteine 290, cysteine 318-cysteine 335, and cysteine 421-cysteine 447. Residue arginine 118 coordinates substrate. A glycan (N-linked (GlcNAc...) asparagine; by host) is linked at asparagine 146. The active-site Proton donor/acceptor is aspartate 151. Substrate is bound at residue arginine 152. An N-linked (GlcNAc...) asparagine; by host glycan is attached at asparagine 235. 277-278 lines the substrate pocket; that stretch reads EE. Arginine 293 contributes to the substrate binding site. 3 residues coordinate Ca(2+): aspartate 294, glycine 298, and aspartate 324. Residue arginine 368 participates in substrate binding. Tyrosine 402 serves as the catalytic Nucleophile. Residues asparagine 434 and asparagine 455 are each glycosylated (N-linked (GlcNAc...) asparagine; by host).

It belongs to the glycosyl hydrolase 34 family. In terms of assembly, homotetramer. The cofactor is Ca(2+). Post-translationally, N-glycosylated.

The protein resides in the virion membrane. The protein localises to the host apical cell membrane. The catalysed reaction is Hydrolysis of alpha-(2-&gt;3)-, alpha-(2-&gt;6)-, alpha-(2-&gt;8)- glycosidic linkages of terminal sialic acid residues in oligosaccharides, glycoproteins, glycolipids, colominic acid and synthetic substrates.. Inhibited by the neuraminidase inhibitors zanamivir (Relenza) and oseltamivir (Tamiflu). These drugs interfere with the release of progeny virus from infected cells and are effective against all influenza strains. Resistance to neuraminidase inhibitors is quite rare. Its function is as follows. Catalyzes the removal of terminal sialic acid residues from viral and cellular glycoconjugates. Cleaves off the terminal sialic acids on the glycosylated HA during virus budding to facilitate virus release. Additionally helps virus spread through the circulation by further removing sialic acids from the cell surface. These cleavages prevent self-aggregation and ensure the efficient spread of the progeny virus from cell to cell. Otherwise, infection would be limited to one round of replication. Described as a receptor-destroying enzyme because it cleaves a terminal sialic acid from the cellular receptors. May facilitate viral invasion of the upper airways by cleaving the sialic acid moieties on the mucin of the airway epithelial cells. Likely to plays a role in the budding process through its association with lipid rafts during intracellular transport. May additionally display a raft-association independent effect on budding. Plays a role in the determination of host range restriction on replication and virulence. Sialidase activity in late endosome/lysosome traffic seems to enhance virus replication. This is Neuraminidase from Aves (Human).